Here is a 114-residue protein sequence, read N- to C-terminus: Iron-sulfur cluster insertion protein ErpA (114 aa).

Iron-sulfur cluster is bound by residues cysteine 42, cysteine 106, and cysteine 108.

It belongs to the HesB/IscA family. Homodimer. Iron-sulfur cluster is required as a cofactor.

In terms of biological role, required for insertion of 4Fe-4S clusters for at least IspG. This is Iron-sulfur cluster insertion protein ErpA from Wigglesworthia glossinidia brevipalpis.